The primary structure comprises 500 residues: L-arabinose isomerase (500 aa).

Positions 306, 333, 350, and 450 each coordinate Mn(2+).

This sequence belongs to the arabinose isomerase family. Homohexamer. Mn(2+) is required as a cofactor.

The catalysed reaction is beta-L-arabinopyranose = L-ribulose. It participates in carbohydrate degradation; L-arabinose degradation via L-ribulose; D-xylulose 5-phosphate from L-arabinose (bacterial route): step 1/3. Its function is as follows. Catalyzes the conversion of L-arabinose to L-ribulose. The sequence is that of L-arabinose isomerase from Escherichia fergusonii (strain ATCC 35469 / DSM 13698 / CCUG 18766 / IAM 14443 / JCM 21226 / LMG 7866 / NBRC 102419 / NCTC 12128 / CDC 0568-73).